Here is a 409-residue protein sequence, read N- to C-terminus: L-cysteine:1D-myo-inositol 2-amino-2-deoxy-alpha-D-glucopyranoside ligase (409 aa).

Cys43 lines the Zn(2+) pocket. L-cysteinyl-5'-AMP is bound by residues 43 to 46, Thr58, and 81 to 83; these read CGIT and NVT. The 'HIGH' region signature appears at 45–55; sequence ITPYDATHMGH. The 'ERGGDP' region signature appears at 183-188; sequence ERGGDP. L-cysteinyl-5'-AMP is bound at residue Trp224. Cys228 contributes to the Zn(2+) binding site. Residue 246–248 participates in L-cysteinyl-5'-AMP binding; the sequence is GSD. Position 253 (His253) interacts with Zn(2+). An L-cysteinyl-5'-AMP-binding site is contributed by Val280. The short motif at 286–290 is the 'KMSKS' region element; that stretch reads KMSKS.

It belongs to the class-I aminoacyl-tRNA synthetase family. MshC subfamily. As to quaternary structure, monomer. The cofactor is Zn(2+).

It catalyses the reaction 1D-myo-inositol 2-amino-2-deoxy-alpha-D-glucopyranoside + L-cysteine + ATP = 1D-myo-inositol 2-(L-cysteinylamino)-2-deoxy-alpha-D-glucopyranoside + AMP + diphosphate + H(+). Functionally, catalyzes the ATP-dependent condensation of GlcN-Ins and L-cysteine to form L-Cys-GlcN-Ins. The chain is L-cysteine:1D-myo-inositol 2-amino-2-deoxy-alpha-D-glucopyranoside ligase from Streptomyces scabiei (strain 87.22).